We begin with the raw amino-acid sequence, 135 residues long: Small ribosomal subunit protein uS9 (135 aa).

Belongs to the universal ribosomal protein uS9 family.

This chain is Small ribosomal subunit protein uS9, found in Petrotoga mobilis (strain DSM 10674 / SJ95).